The chain runs to 398 residues: Maltoporin (398 aa).

A signal peptide spans 1 to 30 (MTDKNNKRLFKVAPLATAIAASLFTVNASA).

This sequence belongs to the porin LamB (TC 1.B.3) family. In terms of assembly, homotrimer formed of three 18-stranded antiparallel beta-barrels, containing three independent channels.

The protein resides in the cell outer membrane. The catalysed reaction is beta-maltose(in) = beta-maltose(out). Involved in the transport of maltose and maltodextrins. In Hahella chejuensis (strain KCTC 2396), this protein is Maltoporin.